A 588-amino-acid polypeptide reads, in one-letter code: Pre-mRNA 3'-end-processing factor FIP1 (588 aa).

The span at 1-10 (MSAGEVERLV) shows a compositional bias: basic and acidic residues. Disordered regions lie at residues 1–81 (MSAG…EDDV), 223–291 (QGRT…ESPD), and 334–588 (VDNN…TPAE). A sufficient for interaction with PAPOLA region spans residues 1 to 96 (MSAGEVERLV…DIKTGAPQYG (96 aa)). Residues 1 to 341 (MSAGEVERLV…TAVDNNFSKP (341 aa)) form a necessary for stimulating PAPOLA activity region. Acidic residues-rich tracts occupy residues 19 to 40 (GDEEEEWLYGDENEVERPEEEN) and 66 to 80 (TEDDSDSDSDDDEDD). Ser70, Ser72, and Ser74 each carry phosphoserine. The segment at 122-228 (KGVDLDAPGS…FKVQQGRTGN (107 aa)) is sufficient for interaction with CPSF4. A compositionally biased stretch (low complexity) spans 259-270 (STSSQSQTSTAS). Positions 280 to 291 (WQDRYGRAESPD) are enriched in basic and acidic residues. The residue at position 289 (Ser289) is a Phosphoserine. Positions 340–398 (KPPPFFPPGAPPTHLPPPPFLPPPPTVSTAPPLIPPPGIPITVPPPGFPPPPGAPPPSL) are enriched in pro residues. A Phosphotyrosine modification is found at Tyr420. A sufficient for interaction with CPSF1 and CSTF3 region spans residues 437–588 (SLVDTSKQWD…QESTEATPAE (152 aa)). The span at 448-486 (YARREKDRDRERDRDRERDRDRDRERERTRERERERDHS) shows a compositional bias: basic and acidic residues. Residues 451–484 (REKDRDRERDRDRERDRDRDRERERTRERERERD) form an arg/Asp/Glu-rich domain region. Position 486 is a phosphoserine (Ser486). Thr488 carries the phosphothreonine modification. A phosphoserine mark is found at Ser490 and Ser494. Positions 495-522 (DEERYRYREYAERGYERHRASREKEERH) are enriched in basic and acidic residues. A compositionally biased stretch (basic residues) spans 536 to 545 (KSSRSNSRRR). A Phosphoserine modification is found at Ser548. Basic residues predominate over residues 554 to 564 (HRRHKHKKSKR).

Belongs to the FIP1 family. Component of the cleavage and polyadenylation specificity factor (CPSF) complex, composed of CPSF1, CPSF2, CPSF3, CPSF4 and FIP1L1. Found in a complex with CPSF1, FIP1L1 and PAPOLA. Interacts with CPSF1, CPSF4, CSTF2 and CSTF3. Interacts with AHCYL1 (when phosphorylated); the interaction is direct and associates AHCYL1 with the CPSF complex and RNA. Interacts with PAPOLA; the interaction seems to be increased by the interaction with AHCYL1. Interacts with NUDT21/CPSF5; this interaction occurs in a RNA sequence-specific manner. Interacts (preferentially via unphosphorylated form and Arg/Glu/Asp-rich domain) with CPSF6 (via Arg/Ser-rich domain); this interaction mediates, at least in part, the interaction between the CFIm and CPSF complexes and may be inhibited by CPSF6 hyper-phosphorylation. Interacts (preferentially via unphosphorylated form and Arg/Asp/Glu-rich domain) with CPSF7 (via Arg/Ser-rich domain); this interaction mediates, at least in part, the interaction between the CFIm and CPSF complexes and may be inhibited by CPSF7 hyper-phosphorylation.

The protein localises to the nucleus. Component of the cleavage and polyadenylation specificity factor (CPSF) complex that plays a key role in pre-mRNA 3'-end formation, recognizing the AAUAAA signal sequence and interacting with poly(A) polymerase and other factors to bring about cleavage and poly(A) addition. FIP1L1 contributes to poly(A) site recognition and stimulates poly(A) addition. Binds to U-rich RNA sequence elements surrounding the poly(A) site. May act to tether poly(A) polymerase to the CPSF complex. In Pongo abelii (Sumatran orangutan), this protein is Pre-mRNA 3'-end-processing factor FIP1 (FIP1L1).